The sequence spans 88 residues: Exodeoxyribonuclease 7 small subunit (88 aa).

The tract at residues 69–88 is disordered; that stretch reads DPMHPDDGEPFDPSLVSTSQ.

This sequence belongs to the XseB family. Heterooligomer composed of large and small subunits.

The protein resides in the cytoplasm. It catalyses the reaction Exonucleolytic cleavage in either 5'- to 3'- or 3'- to 5'-direction to yield nucleoside 5'-phosphates.. In terms of biological role, bidirectionally degrades single-stranded DNA into large acid-insoluble oligonucleotides, which are then degraded further into small acid-soluble oligonucleotides. The polypeptide is Exodeoxyribonuclease 7 small subunit (Xylella fastidiosa (strain M23)).